A 101-amino-acid polypeptide reads, in one-letter code: Large ribosomal subunit protein bL28 (101 aa).

This sequence belongs to the bacterial ribosomal protein bL28 family.

In Caulobacter sp. (strain K31), this protein is Large ribosomal subunit protein bL28.